The following is a 688-amino-acid chain: Methionine--tRNA ligase (688 aa).

The 'HIGH' region motif lies at Pro-15–His-25. Zn(2+) contacts are provided by Cys-146, Cys-149, Cys-159, and Cys-162. The 'KMSKS' region signature appears at Lys-332 to Ser-336. Lys-335 contacts ATP. The tract at residues Ala-552–Ser-576 is disordered. The span at Ala-554–Thr-564 shows a compositional bias: basic and acidic residues. One can recognise a tRNA-binding domain in the interval Asp-587–Lys-688.

It belongs to the class-I aminoacyl-tRNA synthetase family. MetG type 1 subfamily. As to quaternary structure, homodimer. Zn(2+) is required as a cofactor.

The protein resides in the cytoplasm. It carries out the reaction tRNA(Met) + L-methionine + ATP = L-methionyl-tRNA(Met) + AMP + diphosphate. Functionally, is required not only for elongation of protein synthesis but also for the initiation of all mRNA translation through initiator tRNA(fMet) aminoacylation. The protein is Methionine--tRNA ligase of Shewanella woodyi (strain ATCC 51908 / MS32).